The primary structure comprises 1230 residues: MEEDAGAASPAPEPEPEVDPARELEPEAGVSESISRLWTDVMGILDGSLGNIDDLAQQYADYYNTCFSDVCERMEELRKRRVSQDLDVEKPDASPTSLQLRSQIEESLGFCSAVSTPEVERKYPLHKSNSEDGCVGKGDWKKKNKYFWQNFRKNQKGIMRQTSKGEDVGYVASEITMSDEERIQLMMMVKEKMITIEEALARLKEYEAQHRQSSTLDPADWPDGSYPTLDGSSTCNSREQSDDETEDSVKFKRLHKLVNSTRRVRKKLIRVEEMKKPSAEGGEEHVFENSPVQDERSALYSGVHKKPFFYDGSPEKPPEDDADSLTPSPSSSSLDTWGAGRKLVKTFSKGESRGLIKPPKKMGTFFSYPEEEKAQKVSRSLTEGEMKKGLGSLSHGRTCSFGGFDLTNRSLHVGSNNSDPAGKEGDFVYKEVIKSPPAPRISLGKKVRSVKETMRKRMSKKYSSPVSEQDSGLDGMPSSPASGKPDSEHVDKPKLKAGGSVESLRSSLSGQSSMSGQTVSTTDSSTSNRESVKSEDGDDEEPPYRGPFCGRARVHTDFTPSPYDTDSLKLKKGDIIDIISKPPMGTWMGLLNNKVGTFKFIYVDVLNEEEEKPKRPTRRRKKGRPSQPKSVEDLLDRINLKEHMPTFLFNGYEDLDTFKLLEEEDLDELNIRDPEHRAVLLTAVELLQEYDSNSDQSGSQEKLLVDNQGLSGRSPRDSGCYESSENLENAKTHKPSVLSTKSSTESNLKSFTRSQPGNYPTLPLMKSGEVRKQGEEGRLGRGLAPDTAKSCDVPSVTDLSKNRRSLPVSICRSCETLEGPEPVESWPRSHSLDDLQGDADVGKNVPTEMPETCSQNVPEVPQKTSACTSKALPRGRDPTADVMLLTQSKRFSDPPKTMAKKLDGSVVASNLGIAPPQCIPRDFEAQPPVKPGLTRTSLEGLRKGHDHHPLGTKEGVDGEQSAPETRTQSRHPSQPPPVPAKKSRERLANGLHLVPSPEAPILPLKKASPASPVSPSDCPSPREPRPSSGTEPGSPACTRPPPWLAELPESTSLQEHGVKLGPVLSRKVSCVRGVDLEMLTENKLQAEGIDLTEEPYSDKHGRCGIPEALVQRYAEDLEQPERDVATNMDQIRVKLLRKQHRMAIPSGGLTEICRKPLSPGCVASMSDWLISIGLPMYTSTLSDAGFSTLSQVPSLSHSCLQEAGITEERHIRKLITAARLFKLPPSPEAM.

The segment covering 1 to 10 (MEEDAGAASP) has biased composition (low complexity). The interval 1–30 (MEEDAGAASPAPEPEPEVDPARELEPEAGV) is disordered. 2 positions are modified to phosphoserine: serine 83 and serine 241. 2 disordered regions span residues 211–249 (RQSS…EDSV) and 275–337 (KKPS…LDTW). Basic and acidic residues predominate over residues 275–297 (KKPSAEGGEEHVFENSPVQDERS). Over residues 324–336 (SLTPSPSSSSLDT) the composition is skewed to low complexity. Residue serine 400 is modified to Phosphoserine. 3 disordered regions span residues 439–566 (PRIS…YDTD), 610–633 (EEKP…SVED), and 705–792 (VDNQ…KSCD). Over residues 461 to 470 (KYSSPVSEQD) the composition is skewed to polar residues. A compositionally biased stretch (basic and acidic residues) spans 485 to 494 (PDSEHVDKPK). Residues 498 to 516 (GGSVESLRSSLSGQSSMSG) are compositionally biased toward low complexity. Residues 517 to 529 (QTVSTTDSSTSNR) show a composition bias toward polar residues. Positions 547-608 (PFCGRARVHT…KFIYVDVLNE (62 aa)) constitute an SH3 domain. Residues 615 to 624 (RPTRRRKKGR) are compositionally biased toward basic residues. The region spanning 626 to 690 (SQPKSVEDLL…LTAVELLQEY (65 aa)) is the SAM 1 domain. The span at 737 to 758 (VLSTKSSTESNLKSFTRSQPGN) shows a compositional bias: polar residues. The span at 768-779 (GEVRKQGEEGRL) shows a compositional bias: basic and acidic residues. Phosphoserine is present on residues serine 813 and serine 831. Disordered stretches follow at residues 818-875 (EGPE…LPRG) and 915-1045 (PPQC…PWLA). A required for interaction with TRAF6 region spans residues 844–852 (NVPTEMPET). The span at 852–868 (TCSQNVPEVPQKTSACT) shows a compositional bias: polar residues. Over residues 940 to 956 (GLRKGHDHHPLGTKEGV) the composition is skewed to basic and acidic residues. Residues 962–972 (APETRTQSRHP) show a composition bias toward polar residues. Residues 1008–1019 (SPASPVSPSDCP) show a composition bias toward low complexity. One can recognise an SAM 2 domain in the interval 1160–1224 (GCVASMSDWL…ITAARLFKLP (65 aa)).

Interacts with GNAS. Interacts with IQGAP1. Interacts with TRAF6 (via C-terminus); the interaction is LPS-dependent. Interacts with MAP3K7, CHUK and IKBKB. In terms of tissue distribution, expressed in the microvascular endothelium of various organs, as well as in parenchymal cells. Expressed in the endothelium but not lymphoid cells of spleen and thymus.

It is found in the cytoplasm. Is a positive regulator of NF-kappa-B signaling downstream of TLR4 activation. It acts as a scaffold molecule to assemble a molecular complex that includes TRAF6, MAP3K7, CHUK and IKBKB, thereby facilitating NF-kappa-B signaling activation. Regulates TRAF6 and MAP3K7 ubiquitination. Involved in the regulation of cell mobility. Regulates lipolysaccharide (LPS)-induced endothelial cell migration. Is involved in the regulation of skin pigmentation through the control of melanocyte migration in the epidermis. The chain is SAM and SH3 domain-containing protein 1 (Sash1) from Mus musculus (Mouse).